Consider the following 420-residue polypeptide: L-cysteine:1D-myo-inositol 2-amino-2-deoxy-alpha-D-glucopyranoside ligase (420 aa).

Cys48 contacts Zn(2+). Residues 48–51 (CGIT), Thr63, and 86–88 (NIT) each bind L-cysteinyl-5'-AMP. The 'HIGH' region signature appears at 50–60 (ITPYDSTHLGH). The short motif at 192–197 (ERGGDP) is the 'ERGGDP' region element. Trp232 contributes to the L-cysteinyl-5'-AMP binding site. Cys236 serves as a coordination point for Zn(2+). 254-256 (GSD) lines the L-cysteinyl-5'-AMP pocket. A Zn(2+)-binding site is contributed by His261. Ile288 contributes to the L-cysteinyl-5'-AMP binding site. A 'KMSKS' region motif is present at residues 294 to 298 (KMSKS).

Belongs to the class-I aminoacyl-tRNA synthetase family. MshC subfamily. In terms of assembly, monomer. The cofactor is Zn(2+).

The enzyme catalyses 1D-myo-inositol 2-amino-2-deoxy-alpha-D-glucopyranoside + L-cysteine + ATP = 1D-myo-inositol 2-(L-cysteinylamino)-2-deoxy-alpha-D-glucopyranoside + AMP + diphosphate + H(+). In terms of biological role, catalyzes the ATP-dependent condensation of GlcN-Ins and L-cysteine to form L-Cys-GlcN-Ins. The protein is L-cysteine:1D-myo-inositol 2-amino-2-deoxy-alpha-D-glucopyranoside ligase of Corynebacterium glutamicum (strain R).